The chain runs to 2572 residues: Zinc finger homeobox protein 2 (2572 aa).

2 disordered regions span residues 1–107 (MATL…GLPP) and 343–425 (LSPP…ADDY). Positions 8-36 (STTGTTPSPGHNAPSLPSDTFSSSTPSDP) are enriched in low complexity. 2 stretches are compositionally biased toward polar residues: residues 44–53 (ASSTSENMRS) and 389–398 (LNQSSPTSKE). 2 C2H2-type zinc fingers span residues 453-476 (LKCP…REKH) and 508-532 (YRCD…SDKH). Disordered stretches follow at residues 537–566 (QGFQ…PKTK), 608–655 (LPPG…LRPD), and 675–710 (RKFP…SPPP). The span at 615–628 (PGPPPPPGATPTSP) shows a compositional bias: pro residues. The span at 696-705 (LLGSSSDSLP) shows a compositional bias: low complexity. 2 C2H2-type zinc fingers span residues 821-845 (LRCN…GAAH) and 870-894 (YHCL…TPAH). The segment at 929–974 (QLRTPGKAPVTPLAEPPTPEKDAQNKTEQLASEETENKTGPSRDSA) is disordered. Residues 954 to 974 (KTEQLASEETENKTGPSRDSA) are compositionally biased toward polar residues. The C2H2-type 5 zinc-finger motif lies at 1009–1032 (YRCPLCQEQLVGRPALHFHLSHLH). The segment at 1061-1171 (PTLSPLDNGQ…PAPADSRHPL (111 aa)) is disordered. The span at 1120-1132 (GQPPSPAPSPVPE) shows a compositional bias: pro residues. 2 C2H2-type zinc fingers span residues 1191–1217 (YKCT…SHLH) and 1248–1272 (FKCT…SVLH). Disordered regions lie at residues 1269 to 1325 (SVLH…FLSP), 1389 to 1408 (LPAA…LAER), and 1415 to 1434 (MAKE…LPNE). Residues 1279–1311 (TKTDSKIEGPERSQEEPKEGETEGEVGTEKKGP) are compositionally biased toward basic and acidic residues. Residues 1392–1401 (ATPPPPPQPP) are compositionally biased toward pro residues. A C2H2-type 8 zinc finger spans residues 1480-1503 (LACGACGKLFSNMLILKTHEEHVH). The segment at 1528–1591 (PPLAEPPKPP…SSRGNLPPLV (64 aa)) is disordered. The homeobox 1 DNA-binding region spans 1595-1654 (RRFSRTKFTEFQTQALQSFFETSAYPKDGEVERLASLLGLASRVVVVWFQNARQKARKNA). Residues 1670-1696 (SGCRRCHATFSCVFELVRHLKKCYDDQ) form a C2H2-type 9; degenerate zinc finger. The span at 1696–1724 (QTLEEEEEEAERGEEEEEVEEEEVEEEQG) shows a compositional bias: acidic residues. 5 disordered regions span residues 1696 to 1769 (QTLE…SPAH), 1820 to 1860 (AATS…DKRL), 1912 to 2065 (ERKG…GMGQ), 2268 to 2327 (VQTA…NDAL), and 2398 to 2431 (NALL…EAGE). Residues 1728-1738 (PAGPEGPLPEP) are compositionally biased toward pro residues. The C2H2-type 10 zinc-finger motif lies at 1769 to 1791 (HTCDQCAISFSSQDLLTSHRRLH). Positions 1857 to 1916 (DKRLRTTILPEQLEILYRWYMQDSNPTRKMLDCISEEVGLKKRVVQVWFQNTRARERKGQ) form a DNA-binding region, homeobox 2. Over residues 1925–1939 (PSPAVKPPATATPAS) the composition is skewed to low complexity. Residues 1949–1963 (KVDDGTGREAPKREA) show a composition bias toward basic and acidic residues. The segment covering 1991-2004 (TPEPPLPLLPPPPP) has biased composition (pro residues). The span at 2017–2044 (SPESEACSLSAGDLSDSSASSLAEPESP) shows a compositional bias: low complexity. Residues 2045 to 2061 (GAGGTSGGPGGGTGVPD) are compositionally biased toward gly residues. A DNA-binding region (homeobox 3) is located at residues 2065 to 2124 (QRRYRTQMSSLQLKIMKACYEAYRTPTMQECEVLGEEIGLPKRVIQVWFQNARAKEKKAK). Positions 2284-2293 (DQTNTSTAGT) are enriched in polar residues. The segment covering 2305–2315 (LGDKVSSERKP) has biased composition (basic and acidic residues). A compositionally biased stretch (pro residues) spans 2402–2422 (QPPPQPPEPTATAPPKPPELP). The segment at 2451–2471 (YLCRQCKMAFDGEAPATAHQR) adopts a C2H2-type 11; degenerate zinc-finger fold. Residues 2495–2519 (YHCLACEVLLSGREALASHLRSSAH) form a C2H2-type 12 zinc finger. A disordered region spans residues 2551 to 2572 (EARLPHTDSNPKTTTTSTLLAL). Residues 2563 to 2572 (TTTTSTLLAL) are compositionally biased toward low complexity.

It is found in the nucleus. Its function is as follows. Transcriptional regulator that is critical for the regulation of pain perception and processing of noxious stimuli. This chain is Zinc finger homeobox protein 2 (ZFHX2), found in Homo sapiens (Human).